A 95-amino-acid polypeptide reads, in one-letter code: MALRHKSAQKRHRQSLKRRLINRSRKNTIKTFSKKAVVAAQNGAENAVELHRKAESLIDKAAKGSTLHKNAAARKKSRLAKALNKAKAAQAAQPA.

Disordered stretches follow at residues 1–26 (MALRHKSAQKRHRQSLKRRLINRSRK) and 76–95 (KSRLAKALNKAKAAQAAQPA). Residues 80-95 (AKALNKAKAAQAAQPA) are compositionally biased toward low complexity.

The protein belongs to the bacterial ribosomal protein bS20 family.

In terms of biological role, binds directly to 16S ribosomal RNA. This is Small ribosomal subunit protein bS20 from Deinococcus geothermalis (strain DSM 11300 / CIP 105573 / AG-3a).